The chain runs to 196 residues: Serine recombinase PinQ (196 aa).

The Resolvase/invertase-type recombinase catalytic domain maps to 3–143 (QIFAYCRIST…SGIVRARGAG (141 aa)). The O-(5'-phospho-DNA)-serine intermediate role is filled by serine 11.

It belongs to the site-specific recombinase resolvase family.

This is Serine recombinase PinQ (pinQ) from Escherichia coli (strain K12).